The following is a 307-amino-acid chain: uncharacterized protein (307 aa).

A run of 8 helical transmembrane segments spans residues 1–21, 52–72, 99–119, 133–153, 174–194, 208–228, 242–262, and 277–297; these read MLIL…MNML, IVFT…IGFV, FIAI…LLFF, FLGL…AGPL, LLIG…IGIL, AMSV…MAAV, VVFN…ATGF, and FSLL…NLFY.

The protein resides in the cell membrane. This is an uncharacterized protein from Bacillus subtilis (strain 168).